We begin with the raw amino-acid sequence, 243 residues long: MLIIAGLGNPGGKYAGNRHNIGFMAVDAIHRRHGFSPWSKKFRAEIAEGEVGGEKVLLMKPQTFMNLSGESVGEAMRFYKLQPADLVAIYDELDLPQGKARLKTGGGHNGHNGIKSLDAHCGREYRRLRLGIGHPGIKDMVQNHVLGDFAKADKAWLEPLLDTLADNADMLVRNEDSQLMNKIALALGGKAEEEKPAKEMKDAGKKPASQSHIHQARNHNQPKLPATGPMADMLKKMFGKKGD.

Tyrosine 14 serves as a coordination point for tRNA. Residue histidine 19 is the Proton acceptor of the active site. Residues phenylalanine 64, asparagine 66, and asparagine 112 each coordinate tRNA. The span at 190-205 (KAEEEKPAKEMKDAGK) shows a compositional bias: basic and acidic residues. The segment at 190–243 (KAEEEKPAKEMKDAGKKPASQSHIHQARNHNQPKLPATGPMADMLKKMFGKKGD) is disordered. The segment covering 208 to 221 (ASQSHIHQARNHNQ) has biased composition (polar residues).

Belongs to the PTH family. Monomer.

It is found in the cytoplasm. The enzyme catalyses an N-acyl-L-alpha-aminoacyl-tRNA + H2O = an N-acyl-L-amino acid + a tRNA + H(+). In terms of biological role, hydrolyzes ribosome-free peptidyl-tRNAs (with 1 or more amino acids incorporated), which drop off the ribosome during protein synthesis, or as a result of ribosome stalling. Its function is as follows. Catalyzes the release of premature peptidyl moieties from peptidyl-tRNA molecules trapped in stalled 50S ribosomal subunits, and thus maintains levels of free tRNAs and 50S ribosomes. This Rhizobium johnstonii (strain DSM 114642 / LMG 32736 / 3841) (Rhizobium leguminosarum bv. viciae) protein is Peptidyl-tRNA hydrolase.